The sequence spans 356 residues: MDVMNFLLNLVVPPAGLLMLAFAWPSLAFFRACEWALRIIYGEDMEGKVVIITGASSGIGEQIAYQYAKRRANLVLVARREHRLRSIREKARTLGAKNVLVIAADVVKEEDCKRFIDETINQYGHLDHLVNNAGLGHSFLFEEASDTSGFAHMMDINFWGSVYPTFFALPHLRRRNGRIIVNASVEGWLPMPRMSLYNAAKAAVVSFYETLRIEIGGAIDITIATPGWIESDMTRGRFMTEEGEVLFKEEPREMYVGPYPVAYTEECARTIVSGACKGQRYVRFPMWYNVFFLYRVFVPDLLDWTYRLLFLNHFITTASKDHTLHDFKGARKKLLITPTSLQLLHHQQHQSPKSSE.

Residues 10–30 (LVVPPAGLLMLAFAWPSLAFF) form a helical; Signal-anchor for type II membrane protein membrane-spanning segment. The short motif at 13-26 (PPAGLLMLAFAWPS) is the Proline-knob element. 54–85 (GASSGIGEQIAYQYAKRRANLVLVARREHRLR) contributes to the NADP(+) binding site. Residue serine 184 participates in substrate binding. Tyrosine 197 (proton acceptor) is an active-site residue. NADP(+) is bound by residues 197 to 201 (YNAAK) and lysine 201.

The protein belongs to the short-chain dehydrogenases/reductases (SDR) family. In terms of tissue distribution, expressed in megagametophytes (at protein level).

The protein localises to the lipid droplet. It is found in the membrane. It carries out the reaction an 11beta-hydroxysteroid + NADP(+) = an 11-oxosteroid + NADPH + H(+). The enzyme catalyses corticosterone + NADP(+) = 11-dehydrocorticosterone + NADPH + H(+). The catalysed reaction is 17beta-estradiol + NADP(+) = estrone + NADPH + H(+). In terms of biological role, has dehydrogenase activity against corticosterone (11 beta-hydroxysteroid) and estradiol (17 beta-hydroxysteroid) in the presence of NADP(+). May be involved in signal transduction regulated by various sterols. The chain is 11-beta-hydroxysteroid dehydrogenase from Pinus massoniana (Chinese red pine).